The sequence spans 636 residues: Sodium-dependent nutrient amino acid transporter 1 (636 aa).

Positions 1–40 are disordered; that stretch reads MELKTMPQNGANNGNPQGNTSNNNNTNDSSNSNSNNNNKT. Over 1 to 50 the chain is Cytoplasmic; the sequence is MELKTMPQNGANNGNPQGNTSNNNNTNDSSNSNSNNNNKTERTNWSNGLE. Over residues 7–40 the composition is skewed to low complexity; that stretch reads PQNGANNGNPQGNTSNNNNTNDSSNSNSNNNNKT. The next 3 helical transmembrane spans lie at 51 to 71, 78 to 98, and 131 to 151; these read FLMS…FPFT, GAFL…MYYL, and TICI…YLAV. The N-linked (GlcNAc...) asparagine glycan is linked to Asn184. A run of 9 helical transmembrane segments spans residues 225–245, 254–274, 303–323, 337–357, 397–417, 436–456, 469–489, 511–531, and 547–567; these read PDWK…LVIM, AAYF…GRAV, AVVQ…MFSS, IVTT…FAIL, LFSA…IVAL, VALV…TPGG, TYVV…IYGV, CWLI…MVTI, and VAGW…GWWY.

Belongs to the sodium:neurotransmitter symporter (SNF) (TC 2.A.22) family.

Its subcellular location is the membrane. Its function is as follows. Unusual broad substrate spectrum amino acid:sodium cotransporter that promotes absorption of the D isomers of essential amino acids. Neutral amino acids are the preferred substrates, especially methionine and phenylalanine. The polypeptide is Sodium-dependent nutrient amino acid transporter 1 (Drosophila grimshawi (Hawaiian fruit fly)).